Here is a 183-residue protein sequence, read N- to C-terminus: uncharacterized protein (183 aa).

The disordered stretch occupies residues aspartate 54 to alanine 89.

This is an uncharacterized protein from Human cytomegalovirus (strain AD169) (HHV-5).